A 216-amino-acid polypeptide reads, in one-letter code: Nucleoside triphosphate pyrophosphatase (216 aa).

Aspartate 82 functions as the Proton acceptor in the catalytic mechanism.

The protein belongs to the Maf family. Requires a divalent metal cation as cofactor.

The protein localises to the cytoplasm. It catalyses the reaction a ribonucleoside 5'-triphosphate + H2O = a ribonucleoside 5'-phosphate + diphosphate + H(+). It carries out the reaction a 2'-deoxyribonucleoside 5'-triphosphate + H2O = a 2'-deoxyribonucleoside 5'-phosphate + diphosphate + H(+). In terms of biological role, nucleoside triphosphate pyrophosphatase. May have a dual role in cell division arrest and in preventing the incorporation of modified nucleotides into cellular nucleic acids. In Mycobacterium marinum (strain ATCC BAA-535 / M), this protein is Nucleoside triphosphate pyrophosphatase.